The following is a 668-amino-acid chain: Golgin candidate 2 (668 aa).

A disordered region spans residues 22-317 (QAADSLRKDE…RQREERRRRR (296 aa)). Basic and acidic residues predominate over residues 26–39 (SLRKDEKSETHDEV). 2 stretches are compositionally biased toward polar residues: residues 64 to 86 (GSDS…LSSS) and 100 to 113 (SAPS…NTKL). Composition is skewed to low complexity over residues 123 to 141 (STPN…GGTS) and 168 to 178 (SSSSNVVNSRG). Composition is skewed to basic and acidic residues over residues 184 to 207 (TNKE…RNAP), 215 to 237 (THKE…RRSA), and 250 to 259 (GKRDGRESRR). The span at 290–302 (DESESDYESDSST) shows a compositional bias: acidic residues. Residues 303 to 312 (DSERERQREE) are compositionally biased toward basic and acidic residues. Positions 331 to 539 (AVIKERENMV…SQVEALSSEK (209 aa)) form a coiled coil. 2 helical membrane-spanning segments follow: residues 594–614 (KHLG…TVFL) and 622–642 (IWAV…LLSH).

The protein localises to the golgi apparatus membrane. Functionally, golgi matrix protein playing a role in tethering of vesicles to Golgi membranes and in maintaining the overall structure of the Golgi apparatus. This chain is Golgin candidate 2 (GC2), found in Arabidopsis thaliana (Mouse-ear cress).